The chain runs to 350 residues: Ribonuclease H2 subunit B (350 aa).

The span at 134-151 shows a compositional bias: polar residues; sequence QDYSNSSDTGENQKSNSK. Residues 134–153 are disordered; sequence QDYSNSSDTGENQKSNSKTN.

It belongs to the RNase H2 subunit B family. Highly divergent. In terms of assembly, the RNase 2 complex is a heterotrimer composed of the catalytic subunit RNH201 and of the non-catalytic subunits RNH202 and RNH203.

It is found in the nucleus. Its function is as follows. Non catalytic subunit of RNase H2, an endonuclease that specifically degrades the RNA of RNA:DNA hybrids. Participates in DNA replication, possibly by mediating the removal of lagging-strand Okazaki fragment RNA primers during DNA replication. Mediates the excision of single ribonucleotides from DNA:RNA duplexes. This is Ribonuclease H2 subunit B (RNH202) from Saccharomyces cerevisiae (strain ATCC 204508 / S288c) (Baker's yeast).